Here is a 563-residue protein sequence, read N- to C-terminus: Arginine--tRNA ligase (563 aa).

A 'HIGH' region motif is present at residues 134-144 (ANPTGLLHMGN).

The protein belongs to the class-I aminoacyl-tRNA synthetase family. Monomer.

Its subcellular location is the cytoplasm. The catalysed reaction is tRNA(Arg) + L-arginine + ATP = L-arginyl-tRNA(Arg) + AMP + diphosphate. The polypeptide is Arginine--tRNA ligase (Heliobacterium modesticaldum (strain ATCC 51547 / Ice1)).